Consider the following 242-residue polypeptide: Putative prolyl 4-hydroxylase (242 aa).

The 111-residue stretch at 128–238 folds into the Fe2OG dioxygenase domain; it reads NAEDLQVVRY…KWIANLWFRE (111 aa).

This sequence belongs to the P4HA family. It depends on Fe cation as a cofactor. The cofactor is L-ascorbate.

The protein resides in the virion. It catalyses the reaction L-prolyl-[collagen] + 2-oxoglutarate + O2 = trans-4-hydroxy-L-prolyl-[collagen] + succinate + CO2. May catalyze the post-translational formation of 4-hydroxyproline in -Xaa-Pro-Gly- sequences in the 6 collagen-like proteins of Mimivirus. In Acanthamoeba polyphaga mimivirus (APMV), this protein is Putative prolyl 4-hydroxylase.